The following is a 158-amino-acid chain: MHTRAIYPGTFDPVTNGHADLIERAAKLFKHVVIGIAANPSKKPRFTLEERVALLQLVTSHLDNVEVVGFSGLLVDFAKEQKASVLVRGLRAVSDFEYEFQLANMNRRLSSDLESVFLTPAEENSFISSTLVKEVAHHGGDVSQFVHPEVAKALMTNV.

Residue threonine 10 coordinates substrate. ATP is bound by residues 10 to 11 (TF) and histidine 18. Substrate-binding residues include lysine 42, leucine 74, and arginine 88. Residues 89–91 (GLR), glutamate 99, and 124–130 (NSFISST) each bind ATP.

It belongs to the bacterial CoaD family. As to quaternary structure, homohexamer. It depends on Mg(2+) as a cofactor.

The protein localises to the cytoplasm. It catalyses the reaction (R)-4'-phosphopantetheine + ATP + H(+) = 3'-dephospho-CoA + diphosphate. Its pathway is cofactor biosynthesis; coenzyme A biosynthesis; CoA from (R)-pantothenate: step 4/5. Its function is as follows. Reversibly transfers an adenylyl group from ATP to 4'-phosphopantetheine, yielding dephospho-CoA (dPCoA) and pyrophosphate. The protein is Phosphopantetheine adenylyltransferase of Shewanella sediminis (strain HAW-EB3).